The sequence spans 302 residues: Aspartate carbamoyltransferase catalytic subunit (302 aa).

The carbamoyl phosphate site is built by Arg-53 and Thr-54. Residue Lys-82 participates in L-aspartate binding. 3 residues coordinate carbamoyl phosphate: Arg-103, His-131, and Gln-134. Positions 164 and 223 each coordinate L-aspartate. Carbamoyl phosphate contacts are provided by Leu-260 and Pro-261.

It belongs to the aspartate/ornithine carbamoyltransferase superfamily. ATCase family. As to quaternary structure, heterooligomer of catalytic and regulatory chains.

It carries out the reaction carbamoyl phosphate + L-aspartate = N-carbamoyl-L-aspartate + phosphate + H(+). The protein operates within pyrimidine metabolism; UMP biosynthesis via de novo pathway; (S)-dihydroorotate from bicarbonate: step 2/3. Catalyzes the condensation of carbamoyl phosphate and aspartate to form carbamoyl aspartate and inorganic phosphate, the committed step in the de novo pyrimidine nucleotide biosynthesis pathway. The sequence is that of Aspartate carbamoyltransferase catalytic subunit from Methanococcus maripaludis (strain C7 / ATCC BAA-1331).